The primary structure comprises 119 residues: Beta-2-microglobulin (119 aa).

The first 21 residues, 1–21 (MGKAAAVVLVTLVALLGLAQA), serve as a signal peptide directing secretion. The Ig-like C1-type domain occupies 25-113 (PKVQVYSRFP…HETLKEPQVY (89 aa)). Cys45 and Cys100 are disulfide-bonded.

Belongs to the beta-2-microglobulin family. As to quaternary structure, heterodimer of an alpha chain and a beta chain. Beta-2-microglobulin is the beta-chain of major histocompatibility complex class I molecules.

The protein localises to the secreted. Component of the class I major histocompatibility complex (MHC). Involved in the presentation of peptide antigens to the immune system. In Gallus gallus (Chicken), this protein is Beta-2-microglobulin (B2M).